The chain runs to 636 residues: Methyl-CpG-binding domain protein 1 (636 aa).

The MBD domain occupies 1–69; sequence MAESWQDCPA…TLFDFRQGTL (69 aa). Residues 75-113 are disordered; the sequence is KTHPLAVPSKKKKKPSKPAKTKKQQVGLQRSEVRIETPQ. Residues 83–97 show a composition bias toward basic residues; that stretch reads SKKKKKPSKPAKTKK. Residues 84–88 carry the Nuclear localization signal motif; the sequence is KKKKK. Residue lysine 117 forms a Glycyl lysine isopeptide (Lys-Gly) (interchain with G-Cter in SUMO2) linkage. 2 CXXC-type zinc fingers span residues 187 to 234 and 235 to 281; these read RMFK…RRCL and RIME…RRCF. Zn(2+) contacts are provided by cysteine 194, cysteine 197, cysteine 200, cysteine 206, cysteine 209, cysteine 212, cysteine 228, cysteine 233, cysteine 243, cysteine 246, cysteine 249, cysteine 255, cysteine 258, cysteine 261, cysteine 275, and cysteine 280. The disordered stretch occupies residues 291-314; it reads GSKVASQRHSQAPPLPPHPASQYT. Lysine 293 participates in a covalent cross-link: Glycyl lysine isopeptide (Lys-Gly) (interchain with G-Cter in SUMO2). The CXXC-type 3 zinc-finger motif lies at 348-396; sequence TNQRQNRKCGACAACLRRMDCGRCDFCCDKPKFGGGNQKRQKCRWRQCL. 8 residues coordinate Zn(2+): cysteine 356, cysteine 359, cysteine 362, cysteine 368, cysteine 371, cysteine 374, cysteine 390, and cysteine 395. Residues 407–474 form a disordered region; it reads AGSGSGEGAG…GRGSVLPQPD (68 aa). Position 409 is a phosphoserine (serine 409). Residues lysine 443 and lysine 461 each participate in a glycyl lysine isopeptide (Lys-Gly) (interchain with G-Cter in SUMO2) cross-link. Residues lysine 520 and lysine 559 each participate in a glycyl lysine isopeptide (Lys-Gly) (interchain with G-Cter in SUMO2); alternate cross-link. The tract at residues 543–589 is disordered; sequence QSGFPSKAADPDLSPVKQEPPGPEEDGEEKKDDVSETTPAEEIGGVG. Residues 550–612 form a transcriptional repression domain (TRD) region; it reads AADPDLSPVK…RLRDAEAWLP (63 aa).

As to quaternary structure, interacts with OASL, ATF7IP, ATF7IP2 and BAHD1. Binds CHAF1A and the SUV39H1-CBX5 complex via the MBD domain. Binds MGP via the TRD domain. May be part of the MeCP1 complex. During DNA replication, it recruits SETDB1 to form a S phase-specific complex that facilitates methylation of H3 'Lys-9' during replication-coupled chromatin assembly and is at least composed of the CAF-1 subunit CHAF1A, MBD1 and SETDB1. In terms of assembly, interacts with the Ten-1 ICD form of TENM1. In terms of processing, sumoylated, sumoylation may increase interaction with ATF7IP. Highly expressed in kidney, liver and brain. Detected at lower levels in heart, lung, skeletal muscle, spleen and testis.

The protein localises to the nucleus. It localises to the nucleus matrix. The protein resides in the nucleus speckle. It is found in the chromosome. Transcriptional repressor that binds CpG islands in promoters where the DNA is methylated at position 5 of cytosine within CpG dinucleotides. Binding is abolished by the presence of 7-mG that is produced by DNA damage by methylmethanesulfonate (MMS). Acts as transcriptional repressor and plays a role in gene silencing by recruiting ATF7IP, which in turn recruits factors such as the histone methyltransferase SETDB1. Probably forms a complex with SETDB1 and ATF7IP that represses transcription and couples DNA methylation and histone 'Lys-9' trimethylation. Isoform 1 can also repress transcription from unmethylated promoters. The protein is Methyl-CpG-binding domain protein 1 of Mus musculus (Mouse).